Reading from the N-terminus, the 86-residue chain is RNA-binding protein Hfq (86 aa).

The Sm domain maps to D9–V68. Residues R66 to A86 form a disordered region.

The protein belongs to the Hfq family. As to quaternary structure, homohexamer.

RNA chaperone that binds small regulatory RNA (sRNAs) and mRNAs to facilitate mRNA translational regulation in response to envelope stress, environmental stress and changes in metabolite concentrations. Also binds with high specificity to tRNAs. The sequence is that of RNA-binding protein Hfq from Ectopseudomonas mendocina (strain ymp) (Pseudomonas mendocina).